Consider the following 144-residue polypeptide: Nucleoside diphosphate kinase (144 aa).

The ATP site is built by Lys11, Phe59, Arg87, Thr93, Arg104, and Asn114. The active-site Pros-phosphohistidine intermediate is the His117.

Belongs to the NDK family. In terms of assembly, homotetramer. Requires Mg(2+) as cofactor.

Its subcellular location is the cytoplasm. It catalyses the reaction a 2'-deoxyribonucleoside 5'-diphosphate + ATP = a 2'-deoxyribonucleoside 5'-triphosphate + ADP. The catalysed reaction is a ribonucleoside 5'-diphosphate + ATP = a ribonucleoside 5'-triphosphate + ADP. Its function is as follows. Major role in the synthesis of nucleoside triphosphates other than ATP. The ATP gamma phosphate is transferred to the NDP beta phosphate via a ping-pong mechanism, using a phosphorylated active-site intermediate. In Sorangium cellulosum (strain So ce56) (Polyangium cellulosum (strain So ce56)), this protein is Nucleoside diphosphate kinase.